The chain runs to 238 residues: Ribonuclease PH (238 aa).

Phosphate contacts are provided by residues R86 and 124–126 (GTR).

This sequence belongs to the RNase PH family. Homohexameric ring arranged as a trimer of dimers.

The catalysed reaction is tRNA(n+1) + phosphate = tRNA(n) + a ribonucleoside 5'-diphosphate. Its function is as follows. Phosphorolytic 3'-5' exoribonuclease that plays an important role in tRNA 3'-end maturation. Removes nucleotide residues following the 3'-CCA terminus of tRNAs; can also add nucleotides to the ends of RNA molecules by using nucleoside diphosphates as substrates, but this may not be physiologically important. Probably plays a role in initiation of 16S rRNA degradation (leading to ribosome degradation) during starvation. The sequence is that of Ribonuclease PH from Anaeromyxobacter sp. (strain Fw109-5).